We begin with the raw amino-acid sequence, 76 residues long: uncharacterized protein (76 aa).

The helical transmembrane segment at 18-38 (FISALFFFNAVCIVSDNLLII) threads the bilayer.

It is found in the cell membrane. This is an uncharacterized protein from Escherichia coli O6:H1 (strain CFT073 / ATCC 700928 / UPEC).